The sequence spans 1296 residues: Probable serine/threonine protein kinase IREH1 (1296 aa).

Disordered regions lie at residues 1–274, 457–480, and 524–553; these read MVFK…SESP, SGAGRSYSAAKVPSTKKAYSQEQH, and SPALKTVKEAPASEEQNDSKVEPPNIVGSR. A compositionally biased stretch (low complexity) spans 10 to 32; sequence SSKKSGSSSPDSSNSPRSVGSNS. Phosphoserine is present on Ser-32. Composition is skewed to basic and acidic residues over residues 68 to 77, 101 to 112, and 178 to 208; these read DGLKKKDGSS, EVKKPPPPEVKE, and RKKEAGSSKLGLEENMDRTRPSDNKSDRDSL. Low complexity predominate over residues 214-249; sequence PPRSLSPTLPPSGSRLQNVASSSGTGRSEMSSGRSG. The segment at 602-621 adopts a C2H2-type; atypical zinc-finger fold; that stretch reads CRICEEEVPTTHVEDHSRVC. The segment at 724–750 is disordered; the sequence is FGPKSDQGMTTSSASSMTPRSPIPTPR. The span at 730–740 shows a compositional bias: polar residues; it reads QGMTTSSASSM. Residues 882 to 1171 enclose the Protein kinase domain; the sequence is FEIIKPISRG…AAEVKQHIFF (290 aa). Residues 888–896 and Lys-911 contribute to the ATP site; that span reads ISRGAFGRV. The active-site Proton acceptor is Asp-1005. Ser-1070 is subject to Phosphoserine. The region spanning 1172 to 1277 is the AGC-kinase C-terminal domain; sequence KDINWDTLAR…KNLSQLASIN (106 aa). Residues 1214-1245 form a disordered region; sequence PSGEVPDYSDADSMTNSSGCSSNHHEEGEAEE. The segment covering 1225-1235 has biased composition (polar residues); it reads DSMTNSSGCSS. The segment covering 1236–1245 has biased composition (basic and acidic residues); that stretch reads NHHEEGEAEE.

It belongs to the protein kinase superfamily. AGC Ser/Thr protein kinase family.

It carries out the reaction L-seryl-[protein] + ATP = O-phospho-L-seryl-[protein] + ADP + H(+). It catalyses the reaction L-threonyl-[protein] + ATP = O-phospho-L-threonyl-[protein] + ADP + H(+). Its function is as follows. May be involved in root hair elongation. The sequence is that of Probable serine/threonine protein kinase IREH1 from Arabidopsis thaliana (Mouse-ear cress).